Consider the following 782-residue polypeptide: General transcription and DNA repair factor IIH helicase/translocase subunit XPB (782 aa).

Residues 1-11 are compositionally biased toward basic and acidic residues; that stretch reads MGKRDRADRDK. 2 disordered regions span residues 1–51 and 220–240; these read MGKR…ESGT and ISKT…DPQG. The short motif at 6 to 18 is the Nuclear localization signal element; that stretch reads RADRDKKKSRKRH. The segment covering 21-30 has biased composition (acidic residues); the sequence is DEEDDEEDAP. The region spanning 327–488 is the Helicase ATP-binding domain; the sequence is MFGNGRARSG…DLNFLIGPKL (162 aa). ATP is bound at residue 340 to 347; that stretch reads LPCGAGKS. Positions 441–444 match the DEVH box motif; sequence DEVH. A Helicase C-terminal domain is found at 542-702; sequence RACQFLIKFH…LAGMEEEDLA (161 aa). Ser686 is subject to Phosphoserine. Position 751 is a phosphoserine; by CK2 (Ser751).

The protein belongs to the helicase family. RAD25/XPB subfamily. In terms of assembly, component of the 7-subunit TFIIH core complex composed of XPB/ERCC3, XPD/ERCC2, GTF2H1, GTF2H2, GTF2H3, GTF2H4 and GTF2H5, which is active in NER. The core complex associates with the 3-subunit CDK-activating kinase (CAK) module composed of CCNH/cyclin H, CDK7 and MNAT1 to form the 10-subunit holoenzyme (holo-TFIIH) active in transcription. Interacts with PUF60. Interacts with ATF7IP. Interacts with KAT2A; leading to KAT2A recruitment to promoters and acetylation of histones. Part of TBP-based Pol II pre-initiation complex (PIC), in which Pol II core assembles with general transcription factors and other specific initiation factors including GTF2E1, GTF2E2, GTF2F1, GTF2F2, TCEA1, ERCC2, ERCC3, GTF2H2, GTF2H3, GTF2H4, GTF2H5, GTF2A1, GTF2A2, GTF2B and TBP; this large multi-subunit PIC complex mediates DNA unwinding and targets Pol II core to the transcription start site where the first phosphodiester bond forms. Post-translationally, phosphorylation on Ser-751 by CK2 controls the 5'-excision activity of ERCC1-XPF endonuclease; phosphorylated protein inhibits the excision activity and thus NER. Dephosphorylation reactivates the 5'-excision step. Phosphorylation has no effect on transcription or the 3'-5' helicase activity.

The protein resides in the nucleus. The enzyme catalyses Couples ATP hydrolysis with the unwinding of duplex DNA by translocating in the 3'-5' direction.. It catalyses the reaction ATP + H2O = ADP + phosphate + H(+). With respect to regulation, phosphorylation on Ser-751 by CK2 controls the 5'-excision activity of ERCC1-XPF endonuclease; phosphorylated protein inhibits the excision activity and thus NER. ATPase activity is stimulated by TFIIH subunit p52 (GTF2H4). DNA translocase activity by this subunit in TFIIH is stimulated by XPA, ERCC5/XPG and XFP plus ERCC1. Functionally, ATP-dependent 3'-5' DNA helicase/translocase; binds dsDNA rather than ssDNA, unzipping it in a translocase rather than classical helicase activity. Component of the general transcription and DNA repair factor IIH (TFIIH) core complex. When complexed to CDK-activating kinase (CAK), involved in RNA transcription by RNA polymerase II. The ATPase activity of XPB/ERCC3, but not its helicase activity, is required for DNA opening; it may wrap around the damaged DNA wedging it open, causing localized melting and twisting that allows XPD/ERCC2 helicase to anchor. The ATP-dependent helicase activity of XPB/ERCC3 may be required for promoter escape. Also involved in transcription-coupled nucleotide excision repair (NER) of damaged DNA. In NER, TFIIH acts by opening DNA around the lesion to allow the excision of the damaged oligonucleotide and its replacement by a new DNA fragment. The structure of the TFIIH transcription complex differs from the NER-TFIIH complex; large movements by XPD/ERCC2 and XPB/ERCC3 are stabilized by XPA. The protein is General transcription and DNA repair factor IIH helicase/translocase subunit XPB (ERCC3) of Macaca fascicularis (Crab-eating macaque).